Here is a 185-residue protein sequence, read N- to C-terminus: Large ribosomal subunit protein bL25 (185 aa).

The protein belongs to the bacterial ribosomal protein bL25 family. CTC subfamily. As to quaternary structure, part of the 50S ribosomal subunit; part of the 5S rRNA/L5/L18/L25 subcomplex. Contacts the 5S rRNA. Binds to the 5S rRNA independently of L5 and L18.

This is one of the proteins that binds to the 5S RNA in the ribosome where it forms part of the central protuberance. The polypeptide is Large ribosomal subunit protein bL25 (Chlamydia abortus (strain DSM 27085 / S26/3) (Chlamydophila abortus)).